Here is a 152-residue protein sequence, read N- to C-terminus: Prostaglandin E synthase (152 aa).

Topologically, residues M1–A12 are lumenal. A helical transmembrane segment spans residues L13 to K41. R38 contacts glutathione. The Cytoplasmic segment spans residues K42–R60. Residues S61–S90 form a helical membrane-spanning segment. R73–E77 provides a ligand contact to glutathione. Residues F91–N95 are Lumenal-facing. A helical membrane pass occupies residues P96 to G119. The glutathione site is built by H113 and Y117. Over K120–A123 the chain is Cytoplasmic. Residues P124 to L152 traverse the membrane as a helical segment. R126–Y130 contributes to the glutathione binding site.

The protein belongs to the MAPEG family. As to quaternary structure, homotrimer. Requires glutathione as cofactor.

The protein resides in the membrane. Its subcellular location is the cytoplasm. It localises to the perinuclear region. The catalysed reaction is prostaglandin H2 = prostaglandin E2. It carries out the reaction 2-glyceryl-prostaglandin H2 = 2-glyceryl-prostaglandin E2. The enzyme catalyses prostaglandin G2 = (15S)-15-hydroperoxy-prostaglandin E2. It catalyses the reaction 1-chloro-2,4-dinitrobenzene + glutathione = 2,4-dinitrophenyl-S-glutathione + chloride + H(+). The catalysed reaction is (5S)-hydroperoxy-(6E,8Z,11Z,14Z)-eicosatetraenoate + 2 glutathione = (5S)-hydroxy-(6E,8Z,11Z,14Z)-eicosatetraenoate + glutathione disulfide + H2O. The protein operates within lipid metabolism; prostaglandin biosynthesis. Its activity is regulated as follows. Induced by interleukin IL1B. Its function is as follows. Terminal enzyme of the cyclooxygenase (COX)-2-mediated prostaglandin E2 (PGE2) biosynthetic pathway. Catalyzes the glutathione-dependent oxidoreduction of prostaglandin endoperoxide H2 (PGH2) to prostaglandin E2 (PGE2) in response to inflammatory stimuli. Plays a key role in inflammation response, fever and pain. Also catalyzes the oxidoreduction of endocannabinoids into prostaglandin glycerol esters and PGG2 into 15-hydroperoxy-PGE2. In addition, displays low glutathione transferase and glutathione-dependent peroxidase activities, toward 1-chloro-2,4-dinitrobenzene and 5-hydroperoxyicosatetraenoic acid (5-HPETE), respectively. In Homo sapiens (Human), this protein is Prostaglandin E synthase (PTGES).